The chain runs to 202 residues: Venom allergen 5.02 (202 aa).

Intrachain disulfides connect Cys4/Cys16, Cys8/Cys101, Cys26/Cys94, and Cys168/Cys185. Residues 46–187 (KQHNEFRQKV…WHRHYLVCNY (142 aa)) form the SCP domain.

The protein belongs to the CRISP family. Venom allergen 5-like subfamily. In terms of tissue distribution, expressed by the venom gland.

It localises to the secreted. In Vespa crabro (European hornet), this protein is Venom allergen 5.02.